The primary structure comprises 338 residues: UbiA prenyltransferase domain-containing protein 1 (338 aa).

Alanine 2 carries the post-translational modification N-acetylalanine. 8 helical membrane passes run 83–103, 134–154, 160–180, 188–208, 209–229, 245–267, 277–297, and 315–335; these read LLVG…LVNT, FGVF…YLSP, LALI…GIGF, LIIL…IQVG, SLAI…EAIL, IVTL…LLFL, THCT…FSLE, and LNLL…AGSL.

This sequence belongs to the UbiA prenyltransferase family. In terms of assembly, interacts with HMGCR and SOAT1. As to expression, ubiquitously expressed.

The protein localises to the endoplasmic reticulum membrane. It localises to the golgi apparatus membrane. Its subcellular location is the mitochondrion membrane. It is found in the cytoplasm. The protein resides in the nucleus. It carries out the reaction menadiol + (2E,6E,10E)-geranylgeranyl diphosphate = menaquinol-4 + diphosphate. It catalyses the reaction all-trans-decaprenyl diphosphate + 4-hydroxybenzoate = 4-hydroxy-3-(all-trans-decaprenyl)benzoate + diphosphate. The protein operates within quinol/quinone metabolism; menaquinone biosynthesis. It participates in cofactor biosynthesis; ubiquinone biosynthesis. Its function is as follows. Prenyltransferase that mediates the formation of menaquinone-4 (MK-4) and coenzyme Q10. MK-4 is a vitamin K2 isoform present at high concentrations in the brain, kidney and pancreas, and is required for endothelial cell development. Mediates the conversion of phylloquinone (PK) into MK-4, probably by cleaving the side chain of phylloquinone (PK) to release 2-methyl-1,4-naphthoquinone (menadione; K3) and then prenylating it with geranylgeranyl pyrophosphate (GGPP) to form MK-4. Also plays a role in cardiovascular development independently of MK-4 biosynthesis, by acting as a coenzyme Q10 biosynthetic enzyme: coenzyme Q10, also named ubiquinone, plays an important antioxidant role in the cardiovascular system. Mediates biosynthesis of coenzyme Q10 in the Golgi membrane, leading to protect cardiovascular tissues from NOS3/eNOS-dependent oxidative stress. In Homo sapiens (Human), this protein is UbiA prenyltransferase domain-containing protein 1.